We begin with the raw amino-acid sequence, 140 residues long: Flagellar assembly factor FliW (140 aa).

It belongs to the FliW family. In terms of assembly, interacts with translational regulator CsrA and flagellin(s).

The protein localises to the cytoplasm. In terms of biological role, acts as an anti-CsrA protein, binds CsrA and prevents it from repressing translation of its target genes, one of which is flagellin. Binds to flagellin and participates in the assembly of the flagellum. In Syntrophotalea carbinolica (strain DSM 2380 / NBRC 103641 / GraBd1) (Pelobacter carbinolicus), this protein is Flagellar assembly factor FliW.